Consider the following 341-residue polypeptide: Ribosomal RNA small subunit methyltransferase H (341 aa).

S-adenosyl-L-methionine contacts are provided by residues G47–Y49, D64, F91, D109, and Q116.

It belongs to the methyltransferase superfamily. RsmH family.

It localises to the cytoplasm. The enzyme catalyses cytidine(1402) in 16S rRNA + S-adenosyl-L-methionine = N(4)-methylcytidine(1402) in 16S rRNA + S-adenosyl-L-homocysteine + H(+). In terms of biological role, specifically methylates the N4 position of cytidine in position 1402 (C1402) of 16S rRNA. This is Ribosomal RNA small subunit methyltransferase H from Rhizobium leguminosarum bv. trifolii (strain WSM2304).